A 141-amino-acid chain; its full sequence is MVFPVPSAEEKCSAQCQSRQDYSIRSNRIQLHRRPIFKVPPLPVSILVSLDFAYTDLLVGNALLRWSHLVRLARVVLEFLSTKLTSKHAIVGIEYCSVASIGLDAAIWFGRPRQKPSSYHQLYGKKAQLKQMYKYHIIVLF.

This is an uncharacterized protein from Saccharomyces cerevisiae (strain ATCC 204508 / S288c) (Baker's yeast).